We begin with the raw amino-acid sequence, 678 residues long: Macrolide export ATP-binding/permease protein MacB 1 (678 aa).

In terms of domain architecture, ABC transporter spans 11-249; it reads LRLENVSREF…PKMVDIPSVI (239 aa). 47–54 is an ATP binding site; the sequence is GTSGSGKS. 4 helical membrane-spanning segments follow: residues 303–323, 558–578, 608–628, and 641–661; these read ALTM…VALG, IAVI…LVSV, LVCL…GLLF, and AASI…FGFF.

It belongs to the ABC transporter superfamily. Macrolide exporter (TC 3.A.1.122) family. Homodimer. Part of the tripartite efflux system MacAB-TolC, which is composed of an inner membrane transporter, MacB, a periplasmic membrane fusion protein, MacA, and an outer membrane component, TolC. The complex forms a large protein conduit and can translocate molecules across both the inner and outer membranes. Interacts with MacA.

The protein resides in the cell inner membrane. Functionally, part of the tripartite efflux system MacAB-TolC. MacB is a non-canonical ABC transporter that contains transmembrane domains (TMD), which form a pore in the inner membrane, and an ATP-binding domain (NBD), which is responsible for energy generation. Confers resistance against macrolides. The polypeptide is Macrolide export ATP-binding/permease protein MacB 1 (Yersinia pestis bv. Antiqua (strain Nepal516)).